A 594-amino-acid polypeptide reads, in one-letter code: Alanine--tRNA ligase (594 aa).

Residues histidine 456, histidine 460, cysteine 558, and histidine 562 each coordinate Zn(2+).

Belongs to the class-II aminoacyl-tRNA synthetase family. Zn(2+) serves as cofactor.

Its subcellular location is the cytoplasm. It carries out the reaction tRNA(Ala) + L-alanine + ATP = L-alanyl-tRNA(Ala) + AMP + diphosphate. Its function is as follows. Catalyzes the attachment of alanine to tRNA(Ala) in a two-step reaction: alanine is first activated by ATP to form Ala-AMP and then transferred to the acceptor end of tRNA(Ala). Also edits incorrectly charged Ser-tRNA(Ala) and Gly-tRNA(Ala) via its editing domain. This Borreliella afzelii (strain PKo) (Borrelia afzelii) protein is Alanine--tRNA ligase (alaS).